The following is a 361-amino-acid chain: Heme A synthase (361 aa).

The next 8 membrane-spanning stretches (helical) occupy residues 22-42 (LWVR…VLVG), 109-129 (LLAR…WVTG), 139-159 (LLGI…MVAS), 175-195 (HLTI…GLAP), 208-228 (FAFW…LVAG), 269-289 (FVHR…AIAT), 303-323 (VLLF…LLMV), and 324-344 (VPMD…GFAT). Histidine 271 contributes to the heme binding site. A heme-binding site is contributed by histidine 332.

It belongs to the COX15/CtaA family. Type 2 subfamily. As to quaternary structure, interacts with CtaB. Heme b is required as a cofactor.

It localises to the cell membrane. The catalysed reaction is Fe(II)-heme o + 2 A + H2O = Fe(II)-heme a + 2 AH2. Its pathway is porphyrin-containing compound metabolism; heme A biosynthesis; heme A from heme O: step 1/1. Functionally, catalyzes the conversion of heme O to heme A by two successive hydroxylations of the methyl group at C8. The first hydroxylation forms heme I, the second hydroxylation results in an unstable dihydroxymethyl group, which spontaneously dehydrates, resulting in the formyl group of heme A. This chain is Heme A synthase, found in Chelativorans sp. (strain BNC1).